A 155-amino-acid polypeptide reads, in one-letter code: Myelin basic protein (155 aa).

2 disordered regions span residues 1 to 70 (MASA…GRQT) and 109 to 155 (TDGQ…PARR). Alanine 2 carries the N-acetylalanine modification. 2 stretches are compositionally biased toward basic and acidic residues: residues 37–49 (GSRK…KEPA) and 123–134 (KSKEAYRGRRDG).

The protein belongs to the myelin basic protein family.

The protein resides in the myelin membrane. Its function is as follows. This protein may function to maintain proper structure of myelin. The protein is Myelin basic protein (MBP) of Heterodontus francisci (Horn shark).